A 329-amino-acid polypeptide reads, in one-letter code: Caveolae-associated protein 4a (329 aa).

Disordered stretches follow at residues 198–260 (SKEN…NIAK) and 274–329 (KERT…IHED). The stretch at 198–262 (SKENMNKTRE…RLKENIAKKA (65 aa)) forms a coiled coil. Residues 201 to 220 (NMNKTREKTRENLSKTKESL) show a composition bias toward basic and acidic residues. Over residues 221–232 (SKTGQTLGTKFN) the composition is skewed to polar residues. Residues 242–260 (EQREKIKQSSERLKENIAK) are compositionally biased toward basic and acidic residues. Low complexity predominate over residues 279–290 (AEGQEGAEAEPA). Thr-292 carries the post-translational modification Phosphothreonine. The segment covering 310 to 329 (TENKREGPVSEEGATRIHED) has biased composition (basic and acidic residues).

Belongs to the CAVIN family.

The protein resides in the cytoplasm. It localises to the myofibril. It is found in the sarcomere. The protein localises to the membrane. Its subcellular location is the caveola. In terms of biological role, induces rhoa activation and activates nppa transcription and myofibrillar organization through the rho/rock signaling pathway. This Danio rerio (Zebrafish) protein is Caveolae-associated protein 4a (cavin4a).